Here is a 485-residue protein sequence, read N- to C-terminus: NADH-quinone oxidoreductase subunit N (485 aa).

14 consecutive transmembrane segments (helical) span residues L8–I28, F35–V55, G71–A91, F105–L125, S127–F147, Y159–A179, L203–F223, P235–M255, V271–Q291, L297–Q317, V326–L346, A373–I393, W408–V430, and I455–I475.

Belongs to the complex I subunit 2 family. NDH-1 is composed of 13 different subunits. Subunits NuoA, H, J, K, L, M, N constitute the membrane sector of the complex.

The protein resides in the cell inner membrane. It carries out the reaction a quinone + NADH + 5 H(+)(in) = a quinol + NAD(+) + 4 H(+)(out). Functionally, NDH-1 shuttles electrons from NADH, via FMN and iron-sulfur (Fe-S) centers, to quinones in the respiratory chain. The immediate electron acceptor for the enzyme in this species is believed to be ubiquinone. Couples the redox reaction to proton translocation (for every two electrons transferred, four hydrogen ions are translocated across the cytoplasmic membrane), and thus conserves the redox energy in a proton gradient. The protein is NADH-quinone oxidoreductase subunit N of Escherichia coli O139:H28 (strain E24377A / ETEC).